A 349-amino-acid polypeptide reads, in one-letter code: Microbial Terpene synthase-like protein 1 (349 aa).

The Mg(2+) site is built by Asp-98, Asp-102, Asn-243, and Ser-247. A DDXXD motif motif is present at residues 98 to 102 (DDILD).

It belongs to the terpene synthase family. Mg(2+) is required as a cofactor.

The protein operates within secondary metabolite biosynthesis; terpenoid biosynthesis. Its function is as follows. Sesquiterpene synthase converting farnesyl diphosphate to six sesquiterpenes, with beta-elemene, delta-cadinene and an unidentified oxygenated sesquiterpene as the major products. Has no diterpene synthase activity. The chain is Microbial Terpene synthase-like protein 1 from Selaginella moellendorffii (Spikemoss).